Reading from the N-terminus, the 153-residue chain is Small ribosomal subunit protein bS16 (153 aa).

This sequence belongs to the bacterial ribosomal protein bS16 family.

The sequence is that of Small ribosomal subunit protein bS16 from Leifsonia xyli subsp. xyli (strain CTCB07).